A 438-amino-acid chain; its full sequence is V-type ATP synthase beta chain (438 aa).

This sequence belongs to the ATPase alpha/beta chains family.

Functionally, produces ATP from ADP in the presence of a proton gradient across the membrane. The V-type beta chain is a regulatory subunit. This is V-type ATP synthase beta chain (atpB) from Chlamydia pneumoniae (Chlamydophila pneumoniae).